The sequence spans 340 residues: GTP-binding protein REM 2 (340 aa).

Acidic residues predominate over residues 1–13; that stretch reads MHTDLDTDMDMDT. Positions 1–107 are disordered; that stretch reads MHTDLDTDMD…SDSLGSGEAA (107 aa). Residue Ser27 is modified to Phosphoserine. Over residues 40–53 the composition is skewed to basic and acidic residues; the sequence is LLKKSEKLLAELDR. A compositionally biased stretch (low complexity) spans 93–104; it reads SSSGSSDSLGSG. GTP contacts are provided by residues 121-128, 229-232, and 260-261; these read GESGVGKS, NKSD, and AA. Residues 283–308 are disordered; that stretch reads RNHAGGQRPDPGSPEGPAPPARRESL. Pro residues predominate over residues 293–302; that stretch reads PGSPEGPAPP. Position 295 is a phosphoserine (Ser295).

This sequence belongs to the small GTPase superfamily. RGK family.

It localises to the cell membrane. Binds GTP saturably and exhibits a low intrinsic rate of GTP hydrolysis. This Homo sapiens (Human) protein is GTP-binding protein REM 2 (REM2).